A 225-amino-acid chain; its full sequence is Cytidylate kinase (225 aa).

Residue 11–19 (GPAAAGKST) coordinates ATP.

This sequence belongs to the cytidylate kinase family. Type 1 subfamily.

It localises to the cytoplasm. It carries out the reaction CMP + ATP = CDP + ADP. The enzyme catalyses dCMP + ATP = dCDP + ADP. The sequence is that of Cytidylate kinase from Bacillus anthracis (strain A0248).